The chain runs to 411 residues: MQQITDLERTKILQNGGEKVKPTFSKEEMTRRNTRLREYMAKAGIDAVMFTSYHNINYYSDFLYTSFNRSYALVVTQDKHVTVSANIDAGMPWRRSFDENIVYTDWKRDNFLYAVKKVLNEGGFSSGRLGVENDHMTLDLRRQVQDALPNTELVDVSQAVMGHRMFKSDEEIDLIKNGARIADIGGAAVVEAIREGVPEYEVALHGTEAMVREIARTYPHAELRDTWIWFQSGINTDGAHNWATSRKLQRGDILSLNCFPMIAGYYTALERTLFLEEVSDRHLELWEINCKVHRRGLELIKPGARCMDIAAELNEIYREHDLLANRTFGYGHSFGVLSHYYGREAGLELREDIETVLEPGMVVSMEPMIMIPEGEPGAGGYREHDILVISENGTENITKFPFGPEHNIIKK.

His240 is a catalytic residue.

This sequence belongs to the peptidase M24 family. Creatinase subfamily. As to quaternary structure, homodimer.

The enzyme catalyses creatine + H2O = sarcosine + urea. The polypeptide is Creatinase (Bacillus sp. (strain B-0618)).